A 311-amino-acid chain; its full sequence is 4-diphosphocytidyl-2-C-methyl-D-erythritol kinase (311 aa).

The active site involves lysine 13. Position 114–124 (114–124 (PVAGGMAGGSA)) interacts with ATP. The active site involves aspartate 156.

The protein belongs to the GHMP kinase family. IspE subfamily.

The catalysed reaction is 4-CDP-2-C-methyl-D-erythritol + ATP = 4-CDP-2-C-methyl-D-erythritol 2-phosphate + ADP + H(+). The protein operates within isoprenoid biosynthesis; isopentenyl diphosphate biosynthesis via DXP pathway; isopentenyl diphosphate from 1-deoxy-D-xylulose 5-phosphate: step 3/6. Catalyzes the phosphorylation of the position 2 hydroxy group of 4-diphosphocytidyl-2C-methyl-D-erythritol. In Corynebacterium diphtheriae (strain ATCC 700971 / NCTC 13129 / Biotype gravis), this protein is 4-diphosphocytidyl-2-C-methyl-D-erythritol kinase.